We begin with the raw amino-acid sequence, 462 residues long: Glycine--tRNA ligase (462 aa).

Substrate contacts are provided by Arg-99 and Glu-174. ATP contacts are provided by residues 206-208 (RNE), 216-221 (FRTREF), 290-291 (EL), and 334-337 (GADR). 221–225 (FEQME) lines the substrate pocket. Residue 330-334 (EPSLG) coordinates substrate.

Belongs to the class-II aminoacyl-tRNA synthetase family. In terms of assembly, homodimer.

The protein resides in the cytoplasm. The enzyme catalyses tRNA(Gly) + glycine + ATP = glycyl-tRNA(Gly) + AMP + diphosphate. Catalyzes the attachment of glycine to tRNA(Gly). This is Glycine--tRNA ligase from Macrococcus caseolyticus (strain JCSC5402) (Macrococcoides caseolyticum).